The sequence spans 302 residues: tRNA pseudouridine synthase B (302 aa).

D43 functions as the Nucleophile in the catalytic mechanism.

It belongs to the pseudouridine synthase TruB family. Type 1 subfamily.

The enzyme catalyses uridine(55) in tRNA = pseudouridine(55) in tRNA. In terms of biological role, responsible for synthesis of pseudouridine from uracil-55 in the psi GC loop of transfer RNAs. This chain is tRNA pseudouridine synthase B, found in Burkholderia pseudomallei (strain 668).